The chain runs to 390 residues: Mannitol-1-phosphate 5-dehydrogenase (390 aa).

7 to 18 (AVHFGGGNIGRG) serves as a coordination point for NAD(+). Lysine 216 is an active-site residue.

The protein belongs to the mannitol dehydrogenase family. In terms of assembly, monomer.

It carries out the reaction D-mannitol 1-phosphate + NAD(+) = beta-D-fructose 6-phosphate + NADH + H(+). Functionally, catalyzes the NAD(H)-dependent interconversion of D-fructose 6-phosphate and D-mannitol 1-phosphate in the mannitol metabolic pathway. Has a strong preference for NADH over NADPH. The polypeptide is Mannitol-1-phosphate 5-dehydrogenase (Alternaria alternata (Alternaria rot fungus)).